Here is a 338-residue protein sequence, read N- to C-terminus: Ketol-acid reductoisomerase (NADP(+)) (338 aa).

The KARI N-terminal Rossmann domain maps to 1 to 181 (MKVFYDKDCD…GGGRTGIIET (181 aa)). Residues 24 to 27 (YGSQ), arginine 47, serine 50, threonine 52, and 82 to 85 (DEFQ) each bind NADP(+). The active site involves histidine 107. Residue glycine 133 participates in NADP(+) binding. The region spanning 182–327 (TFKDETETDL…EQLRSMMPWI (146 aa)) is the KARI C-terminal knotted domain. Aspartate 190, glutamate 194, glutamate 226, and glutamate 230 together coordinate Mg(2+). A substrate-binding site is contributed by serine 251.

Belongs to the ketol-acid reductoisomerase family. Mg(2+) serves as cofactor.

It carries out the reaction (2R)-2,3-dihydroxy-3-methylbutanoate + NADP(+) = (2S)-2-acetolactate + NADPH + H(+). It catalyses the reaction (2R,3R)-2,3-dihydroxy-3-methylpentanoate + NADP(+) = (S)-2-ethyl-2-hydroxy-3-oxobutanoate + NADPH + H(+). It participates in amino-acid biosynthesis; L-isoleucine biosynthesis; L-isoleucine from 2-oxobutanoate: step 2/4. It functions in the pathway amino-acid biosynthesis; L-valine biosynthesis; L-valine from pyruvate: step 2/4. In terms of biological role, involved in the biosynthesis of branched-chain amino acids (BCAA). Catalyzes an alkyl-migration followed by a ketol-acid reduction of (S)-2-acetolactate (S2AL) to yield (R)-2,3-dihydroxy-isovalerate. In the isomerase reaction, S2AL is rearranged via a Mg-dependent methyl migration to produce 3-hydroxy-3-methyl-2-ketobutyrate (HMKB). In the reductase reaction, this 2-ketoacid undergoes a metal-dependent reduction by NADPH to yield (R)-2,3-dihydroxy-isovalerate. The protein is Ketol-acid reductoisomerase (NADP(+)) of Pseudomonas putida (strain W619).